The primary structure comprises 454 residues: Chromosomal replication initiator protein DnaA (454 aa).

Residues 1-71 (MTKEQWGQLQ…HEVRQEDPAV (71 aa)) are domain I, interacts with DnaA modulators. Positions 71–112 (VRRLRFAVPSHVNATTKPARPAQATAPRAPAEKTPRSTLSTA) are domain II. The interval 82-108 (VNATTKPARPAQATAPRAPAEKTPRST) is disordered. The span at 84-99 (ATTKPARPAQATAPRA) shows a compositional bias: low complexity. The tract at residues 113–334 (PLDARFTFDN…GALTRLCAFA (222 aa)) is domain III, AAA+ region. ATP-binding residues include Gly157, Gly159, Lys160, and Thr161. The interval 335 to 454 (SLVGREIDME…LELLRRALEE (120 aa)) is domain IV, binds dsDNA.

It belongs to the DnaA family. In terms of assembly, oligomerizes as a right-handed, spiral filament on DNA at oriC.

It localises to the cytoplasm. Plays an essential role in the initiation and regulation of chromosomal replication. ATP-DnaA binds to the origin of replication (oriC) to initiate formation of the DNA replication initiation complex once per cell cycle. Binds the DnaA box (a 9 base pair repeat at the origin) and separates the double-stranded (ds)DNA. Forms a right-handed helical filament on oriC DNA; dsDNA binds to the exterior of the filament while single-stranded (ss)DNA is stabiized in the filament's interior. The ATP-DnaA-oriC complex binds and stabilizes one strand of the AT-rich DNA unwinding element (DUE), permitting loading of DNA polymerase. After initiation quickly degrades to an ADP-DnaA complex that is not apt for DNA replication. Binds acidic phospholipids. The protein is Chromosomal replication initiator protein DnaA of Roseobacter denitrificans (strain ATCC 33942 / OCh 114) (Erythrobacter sp. (strain OCh 114)).